The following is a 644-amino-acid chain: ATP-dependent zinc metalloprotease FtsH (644 aa).

At 1 to 4 (MAKN) the chain is on the cytoplasmic side. The helical transmembrane segment at 5 to 25 (LILWLVIAVVLMSVFQSFGPS) threads the bilayer. The Periplasmic portion of the chain corresponds to 26 to 98 (ESNGRKVDYS…VGEPPEEPSL (73 aa)). The chain crosses the membrane as a helical span at residues 99–119 (LASIFISWFPMLLLIGVWIFF). The Cytoplasmic portion of the chain corresponds to 120–644 (MRQMQGGGGK…NTMSEQLGDK (525 aa)). 192 to 199 (GPPGTGKT) contributes to the ATP binding site. H414 contacts Zn(2+). E415 is a catalytic residue. Residues H418 and D492 each coordinate Zn(2+). The interval 598–644 (VRPPAGWEEPGASNNAGDNGSPKAPRPVDEPRTPNPGNTMSEQLGDK) is disordered. The segment covering 632–644 (NPGNTMSEQLGDK) has biased composition (polar residues).

It in the central section; belongs to the AAA ATPase family. This sequence in the C-terminal section; belongs to the peptidase M41 family. As to quaternary structure, homohexamer. Zn(2+) is required as a cofactor.

Its subcellular location is the cell inner membrane. In terms of biological role, acts as a processive, ATP-dependent zinc metallopeptidase for both cytoplasmic and membrane proteins. Plays a role in the quality control of integral membrane proteins. This Escherichia coli O157:H7 protein is ATP-dependent zinc metalloprotease FtsH.